Reading from the N-terminus, the 126-residue chain is Desulfoferrodoxin (126 aa).

Fe cation-binding residues include cysteine 10, cysteine 13, cysteine 29, cysteine 30, histidine 49, histidine 69, histidine 75, cysteine 116, and histidine 119.

Belongs to the desulfoferrodoxin family. In terms of assembly, homodimer. The cofactor is Fe(3+). Requires Cu(2+) as cofactor.

The catalysed reaction is reduced [rubredoxin] + superoxide + 2 H(+) = oxidized [rubredoxin] + H2O2. In terms of biological role, catalyzes the one-electron reduction of superoxide anion radical to hydrogen peroxide at a nonheme ferrous iron center. Plays a fundamental role in case of oxidative stress via its superoxide detoxification activity. This chain is Desulfoferrodoxin (dfx), found in Nitratidesulfovibrio vulgaris (strain ATCC 29579 / DSM 644 / CCUG 34227 / NCIMB 8303 / VKM B-1760 / Hildenborough) (Desulfovibrio vulgaris).